A 130-amino-acid polypeptide reads, in one-letter code: MSLMDPLADALTNIRNNELQGNDSCVIKPASKLIGHVLSTMQKENYIGNFELVDDGKAGIFNVELVGNINKCGVIKPRHAVKNTEFEDYEKRYLPAKNFGILIVTTPQGVMTHHEAKEAGIGGRLLVYVY.

Belongs to the universal ribosomal protein uS8 family. As to quaternary structure, part of the 30S ribosomal subunit.

Its function is as follows. One of the primary rRNA binding proteins, it binds directly to 16S rRNA central domain where it helps coordinate assembly of the platform of the 30S subunit. This chain is Small ribosomal subunit protein uS8, found in Methanosphaera stadtmanae (strain ATCC 43021 / DSM 3091 / JCM 11832 / MCB-3).